We begin with the raw amino-acid sequence, 566 residues long: Beta,beta-carotene 15,15'-dioxygenase (566 aa).

Fe cation is bound by residues H172, H237, H308, and H514. Residues 530-566 (PAETQEVENSDHPTDPTAPELSHSENDFTAGHGGSSL) are disordered.

The protein belongs to the carotenoid oxygenase family. The cofactor is Fe(2+). As to expression, expressed in liver, kidney, small intestine and testis.

The protein resides in the cytoplasm. It is found in the cytosol. It carries out the reaction all-trans-beta-carotene + O2 = 2 all-trans-retinal. The protein operates within cofactor metabolism; retinol metabolism. In terms of biological role, symmetrically cleaves beta-carotene into two molecules of retinal using a dioxygenase mechanism. This is Beta,beta-carotene 15,15'-dioxygenase from Mus musculus (Mouse).